Consider the following 463-residue polypeptide: HEPACAM family member 2 (463 aa).

An N-terminal signal peptide occupies residues 1 to 32 (MGQDAFMELLRSMVGLSLCKIHLLLIAGSCLG). N-linked (GlcNAc...) asparagine glycans are attached at residues asparagine 86, asparagine 130, and asparagine 166. Ig-like C2-type domains follow at residues 150 to 234 (PMVQ…SDII) and 236 to 332 (PTIY…TRFT). 2 disulfides stabilise this stretch: cysteine 171/cysteine 220 and cysteine 271/cysteine 316. Asparagine 321 carries N-linked (GlcNAc...) asparagine glycosylation. Residues 353-373 (LASITGISLFLIISMCLLFLW) form a helical membrane-spanning segment. Topologically, residues 374-463 (KKYQPYKAIR…IPEQQQENTE (90 aa)) are cytoplasmic.

Post-translationally, poly-ADP-ribosylated (PARsylated) by tankyrase TNKS during late G2 and prophase, leading to translocation to mitotic centrosomes. N-glycosylated.

The protein localises to the golgi apparatus membrane. It is found in the cytoplasm. Its subcellular location is the cytoskeleton. The protein resides in the spindle. It localises to the microtubule organizing center. The protein localises to the centrosome. It is found in the midbody. Functionally, required during prometaphase for centrosome maturation. Following poly-ADP-ribosylation (PARsylation) by TNKS, translocates from the Golgi apparatus to mitotic centrosomes and plays a key role in the formation of robust microtubules for prompt movement of chromosomes: anchors AKAP9/CG-NAP, a scaffold protein of the gamma-tubulin ring complex and promotes centrosome maturation. This Mus musculus (Mouse) protein is HEPACAM family member 2 (Hepacam2).